We begin with the raw amino-acid sequence, 601 residues long: DNA topoisomerase I, mitochondrial (601 aa).

Residues 1–50 (MRVVRLLRLRAALTLLGEVPRRPASRGVPGSRRTQKGSGARWEKEKHEDG) constitute a mitochondrion transit peptide. Residues 22–48 (RPASRGVPGSRRTQKGSGARWEKEKHE) are disordered. Interaction with DNA stretches follow at residues 261 to 262 (KY), 324 to 329 (RAGNEK), and 421 to 423 (TAK). One can recognise a Topo IB-type catalytic domain in the interval 268–601 (CSKLKGETAW…LAMAGEDFEF (334 aa)). The active-site O-(3'-phospho-DNA)-tyrosine intermediate is Y559.

This sequence belongs to the type IB topoisomerase family. Ca(2+) is required as a cofactor. The cofactor is Mg(2+). In terms of tissue distribution, ubiquitous; highest in skeletal muscle, heart, brain and fetal liver.

The protein resides in the mitochondrion. It catalyses the reaction ATP-independent breakage of single-stranded DNA, followed by passage and rejoining.. In terms of biological role, releases the supercoiling and torsional tension of DNA introduced during duplication of mitochondrial DNA by transiently cleaving and rejoining one strand of the DNA duplex. Introduces a single-strand break via transesterification at a target site in duplex DNA. The scissile phosphodiester is attacked by the catalytic tyrosine of the enzyme, resulting in the formation of a DNA-(3'-phosphotyrosyl)-enzyme intermediate and the expulsion of a 5'-OH DNA strand. The free DNA strand then rotates around the intact phosphodiester bond on the opposing strand, thus removing DNA supercoils. Finally, in the religation step, the DNA 5'-OH attacks the covalent intermediate to expel the active-site tyrosine and restore the DNA phosphodiester backbone. The polypeptide is DNA topoisomerase I, mitochondrial (TOP1MT) (Homo sapiens (Human)).